Consider the following 1142-residue polypeptide: MGDKDMPTAGMPSLLQSSSESPQSCPEGEDSQSPLQIPQSSPESDDTLYPLQSPQSRSEGEDSSDPLQRPPEGKDSQSPLQIPQSSPEGDDTQSPLQNSQSSPEGKDSLSPLEISQSPPEGEDVQSPLQNPASSFFSSALLSIFQSSPESTQSPFEGFPQSVLQIPVSAASSSTLVSIFQSSPESTQSPFEGFPQSPLQIPVSRSFSSTLLSIFQSSPERTQSTFEGFAQSPLQIPVSPSSSSTLLSLFQSFSERTQSTFEGFAQSSLQIPVSPSFSSTLVSLFQSSPERTQSTFEGFPQSPLQIPVSSSSSSTLLSLFQSSPERTHSTFEGFPQSLLQIPMTSSFSSTLLSIFQSSPESAQSTFEGFPQSPLQIPGSPSFSSTLLSLFQSSPERTHSTFEGFPQSPLQIPMTSSFSSTLLSILQSSPESAQSAFEGFPQSPLQIPVSSSFSYTLLSLFQSSPERTHSTFEGFPQSPLQIPVSSSSSSSTLLSLFQSSPECTQSTFEGFPQSPLQIPQSPPEGENTHSPLQIVPSLPEWEDSLSPHYFPQSPPQGEDSLSPHYFPQSPPQGEDSLSPHYFPQSPQGEDSLSPHYFPQSPPQGEDSMSPLYFPQSPLQGEEFQSSLQSPVSICSSSTPSSLPQSFPESSQSPPEGPVQSPLHSPQSPPEGMHSQSPLQSPESAPEGEDSLSPLQIPQSPLEGEDSLSSLHFPQSPPEWEDSLSPLHFPQFPPQGEDFQSSLQSPVSICSSSTSLSLPQSFPESPQSPPEGPAQSPLQRPVSSFFSYTLASLLQSSHESPQSPPEGPAQSPLQSPVSSFPSSTSSSLSQSSPVSSFPSSTSSSLSKSSPESPLQSPVISFSSSTSLSPFSEESSSPVDEYTSSSDTLLESDSLTDSESLIESEPLFTYTLDEKVDELARFLLLKYQVKQPITKAEMLTNVISRYTGYFPVIFRKAREFIEILFGISLREVDPDDSYVFVNTLDLTSEGCLSDEQGMSQNRLLILILSIIFIKGTYASEEVIWDVLSGIGVRAGREHFAFGEPRELLTKVWVQEHYLEYREVPNSSPPRYEFLWGPRAHSEVIKRKVVEFLAMLKNTVPITFPSSYKDALKDVEERAQAIIDTTDDSTATESASSSVMSPSFSSE.

Residues 1–132 (MGDKDMPTAG…DVQSPLQNPA (132 aa)) are disordered. Positions 13–42 (SLLQSSSESPQSCPEGEDSQSPLQIPQSSP) are enriched in low complexity. Residue Ser63 is modified to Phosphoserine. Low complexity predominate over residues 76–87 (SQSPLQIPQSSP). Residues 92–103 (TQSPLQNSQSSP) are compositionally biased toward polar residues. Phosphoserine occurs at positions 207 and 382. Disordered regions lie at residues 502-778 (TQST…LQRP) and 791-893 (LQSS…SLTD). Residues 614 to 626 (SPLQGEEFQSSLQ) show a composition bias toward polar residues. The span at 627–659 (SPVSICSSSTPSSLPQSFPESSQSPPEGPVQSP) shows a compositional bias: low complexity. Residues 671 to 680 (HSQSPLQSPE) are compositionally biased toward polar residues. 2 stretches are compositionally biased toward low complexity: residues 741–762 (QSPVSICSSSTSLSLPQSFPES) and 807–889 (QSPL…LESD). The region spanning 908–1106 (LDEKVDELAR…ITFPSSYKDA (199 aa)) is the MAGE domain. Ser1063 carries the post-translational modification Phosphoserine. The tract at residues 1118-1142 (IDTTDDSTATESASSSVMSPSFSSE) is disordered. The span at 1123–1142 (DSTATESASSSVMSPSFSSE) shows a compositional bias: low complexity.

In terms of tissue distribution, expressed in testis and in tumors of a wide variety of histologic types.

Its subcellular location is the cytoplasm. In Homo sapiens (Human), this protein is Melanoma-associated antigen C1 (MAGEC1).